The sequence spans 543 residues: Efflux pump mokI (543 aa).

The next 13 membrane-spanning stretches (helical) occupy residues 30–50 (LVVTSVTLVVFLMLLDMSIIV), 90–110 (LLTLKYTFLAFLGVFEVGSAL), 125–145 (AVAGMGGSGLTNGAITILASA), 153–173 (LLIGIMMGLSQIAIVCGPLLG), 185–205 (CFYINLPVGALAAILLLAIHI), 233–253 (LLGFVLFAAFAVMISLALEWG), 261–281 (SSVIIGLFCGAGISLVVFGFW), 307–327 (LFLGFFSGALLTFSYYLPIYF), 340–360 (VYMLPGIGGQIVMAIVSGAII), 364–384 (GYYIPWALASGIIVSISAGLV), 394–416 (AAWVMYQFMGGFGRGCGMQTPII), 428–448 (ALGISLAMFGQTFGGSLFLTL), and 509–529 (VGASGATFLFAWGMGQVGLIW).

This sequence belongs to the major facilitator superfamily. TCR/Tet family.

The protein localises to the membrane. Efflux pump; part of the gene cluster that mediates the biosynthesis of monakolin K, also known as lovastatin, and which acts as a potent competitive inhibitor of HMG-CoA reductase. The sequence is that of Efflux pump mokI from Monascus pilosus (Red mold).